Consider the following 201-residue polypeptide: Putative toxin HigB2 (201 aa).

This sequence belongs to the mycobacterial HigB family.

Functionally, putative toxic component of a type II toxin-antitoxin (TA) system. Its cognate antitoxin would be HigA2. This is Putative toxin HigB2 from Mycobacterium tuberculosis (strain ATCC 25618 / H37Rv).